The following is a 508-amino-acid chain: 3-octaprenyl-4-hydroxybenzoate carboxy-lyase (508 aa).

Asn172 is a Mn(2+) binding site. Prenylated FMN contacts are provided by residues Ile175–Arg177, Arg189–Leu191, and Arg194–Gly195. Glu238 contributes to the Mn(2+) binding site. Catalysis depends on Asp287, which acts as the Proton donor. The segment at Gly483–Val508 is disordered. Positions Pro498 to Val508 are enriched in basic and acidic residues.

Belongs to the UbiD family. As to quaternary structure, homohexamer. The cofactor is prenylated FMN. Mn(2+) serves as cofactor.

It localises to the cell membrane. It carries out the reaction a 4-hydroxy-3-(all-trans-polyprenyl)benzoate + H(+) = a 2-(all-trans-polyprenyl)phenol + CO2. Its pathway is cofactor biosynthesis; ubiquinone biosynthesis. Functionally, catalyzes the decarboxylation of 3-octaprenyl-4-hydroxy benzoate to 2-octaprenylphenol, an intermediate step in ubiquinone biosynthesis. This Chromohalobacter salexigens (strain ATCC BAA-138 / DSM 3043 / CIP 106854 / NCIMB 13768 / 1H11) protein is 3-octaprenyl-4-hydroxybenzoate carboxy-lyase.